The sequence spans 336 residues: GTP 3',8-cyclase (336 aa).

Positions 16-241 constitute a Radical SAM core domain; it reads AYRRTYYYLR…QSKGITDGPA (226 aa). Arginine 25 contacts GTP. Positions 32 and 36 each coordinate [4Fe-4S] cluster. Tyrosine 38 contributes to the S-adenosyl-L-methionine binding site. Position 39 (cysteine 39) interacts with [4Fe-4S] cluster. Arginine 75 provides a ligand contact to GTP. Residue glycine 79 coordinates S-adenosyl-L-methionine. Position 106 (threonine 106) interacts with GTP. Serine 130 serves as a coordination point for S-adenosyl-L-methionine. Position 167 (lysine 167) interacts with GTP. Methionine 201 is a binding site for S-adenosyl-L-methionine. Residues cysteine 264 and cysteine 267 each contribute to the [4Fe-4S] cluster site. 269-271 is a binding site for GTP; the sequence is RLR. Cysteine 281 serves as a coordination point for [4Fe-4S] cluster.

It belongs to the radical SAM superfamily. MoaA family. Monomer and homodimer. [4Fe-4S] cluster serves as cofactor.

The enzyme catalyses GTP + AH2 + S-adenosyl-L-methionine = (8S)-3',8-cyclo-7,8-dihydroguanosine 5'-triphosphate + 5'-deoxyadenosine + L-methionine + A + H(+). It participates in cofactor biosynthesis; molybdopterin biosynthesis. Catalyzes the cyclization of GTP to (8S)-3',8-cyclo-7,8-dihydroguanosine 5'-triphosphate. The polypeptide is GTP 3',8-cyclase (Actinobacillus succinogenes (strain ATCC 55618 / DSM 22257 / CCUG 43843 / 130Z)).